We begin with the raw amino-acid sequence, 436 residues long: Prenyltransferase nscD (436 aa).

The protein belongs to the tryptophan dimethylallyltransferase family.

It functions in the pathway secondary metabolite biosynthesis. Its function is as follows. Prenyltransferase; part of the gene cluster that mediates the biosynthesis of neosartoricin B, a prenylated anthracenone that probably exhibits T-cell antiproliferative activity, suggestive of a physiological role as an immunosuppressive agent. The non-reducing polyketide synthase nscA probably synthesizes and cyclizes the decaketide backbone. The hydrolase nscB then mediates the product release through hydrolysis followed by spontaneous decarboxylation. The prenyltransferase nscD catalyzes the addition of the dimethylallyl group to the aromatic C5. The FAD-dependent monooxygenase nscC is then responsible for the stereospecific hydroxylation at C2. Neosartoricin B can be converted into two additional compounds neosartoricins C and D. Neosartoricin C is a spirocyclic compound that is cyclized through the attack of C3 hydroxyl on C14, followed by dehydration. On the other hand, neosartoricin D is a further cyclized compound in which attack of C2 on C14 in neosartoricin C results in the formation of the acetal-containing dioxabicyclo-octanone ring. Both of these compounds are novel and possibly represent related metabolites of the gene cluster. In Arthroderma benhamiae (strain ATCC MYA-4681 / CBS 112371) (Trichophyton mentagrophytes), this protein is Prenyltransferase nscD.